The chain runs to 233 residues: Histone H1-I (233 aa).

Disordered regions lie at residues 1-55 (MSDS…HPPV) and 115-233 (TGAS…KKSK). The span at 17–29 (KAATPAKSPAKSP) shows a compositional bias: low complexity. Residues 51–125 (THPPVSEMVV…GASGSFKMPP (75 aa)) enclose the H15 domain. Composition is skewed to basic and acidic residues over residues 128-137 (KKVDKPEAAP) and 144-155 (PKREIEKKEKKV). Basic residues-rich tracts occupy residues 172–186 (AAKK…KKAA), 199–213 (SPKK…KPTP), and 223–233 (AAAKKPAKKSK).

This sequence belongs to the histone H1/H5 family.

It is found in the nucleus. It localises to the chromosome. In terms of biological role, histones H1 are necessary for the condensation of nucleosome chains into higher-order structures. The protein is Histone H1-I of Glyptotendipes salinus (Midge).